The chain runs to 330 residues: Autoinducer 2 import system permease protein LsrD (330 aa).

Topologically, residues 1 to 4 (MRIR) are cytoplasmic. Residues 5–25 (YGWELALAALLVIEIVAFGAI) traverse the membrane as a helical segment. The Periplasmic segment spans residues 26–42 (NPRMLDLNMLLFSTSDF). The chain crosses the membrane as a helical span at residues 43–63 (ICIGIVALPLTMVIVSGGIDI). The Cytoplasmic segment spans residues 64-67 (SFGS). The next 2 helical transmembrane spans lie at 68–88 (TIGLCAIALGVLFQSGVPMPL) and 89–109 (AILLTLLLGALCGLINAGLII). At 110–115 (YTKVNP) the chain is on the cytoplasmic side. Residues 116-136 (LVITLGTLYLFAGSALLLSGM) traverse the membrane as a helical segment. Topologically, residues 137-159 (AGATGYEGIGGFPMAFTDFANLD) are periplasmic. Residues 160 to 180 (VLGLPVPLIIFLICLLVFWLW) form a helical membrane-spanning segment. The Cytoplasmic segment spans residues 181 to 209 (LHKTHAGRNVFLIGQSPRVAVYSAIPVNR). The chain crosses the membrane as a helical span at residues 210 to 230 (TLCALYAMTGLASAVAAVLLV). Over 231-237 (SYFGSAR) the chain is Periplasmic. 2 consecutive transmembrane segments (helical) span residues 238 to 258 (SDLGASFLMPAITAVVLGGAN) and 259 to 279 (IYGGSGSIIGTAIAVLLVGYL). Over 280–285 (QQGLQM) the chain is Periplasmic. A helical membrane pass occupies residues 286-306 (AGVPNQVSSALSGALLIVVVV). The Cytoplasmic portion of the chain corresponds to 307-330 (GRSVSLHRQQIKEWLARRANNPLP).

Belongs to the binding-protein-dependent transport system permease family. AraH/RbsC subfamily. The complex is composed of two ATP-binding proteins (LsrA), two transmembrane proteins (LsrC and LsrD) and a solute-binding protein (LsrB).

It is found in the cell inner membrane. Part of the ABC transporter complex LsrABCD involved in autoinducer 2 (AI-2) import. Probably responsible for the translocation of the substrate across the membrane. This chain is Autoinducer 2 import system permease protein LsrD (lsrD), found in Escherichia coli (strain SMS-3-5 / SECEC).